Here is a 245-residue protein sequence, read N- to C-terminus: Uridylate kinase (245 aa).

An ATP-binding site is contributed by 12–15 (KLSG). The involved in allosteric activation by GTP stretch occupies residues 20 to 25 (GEKGVG). Glycine 54 contributes to the UMP binding site. Glycine 55 and arginine 59 together coordinate ATP. Residues aspartate 74 and 135–142 (IGSPYFST) each bind UMP. Residues asparagine 163, tyrosine 169, and aspartate 172 each coordinate ATP.

Belongs to the UMP kinase family. As to quaternary structure, homohexamer.

Its subcellular location is the cytoplasm. It carries out the reaction UMP + ATP = UDP + ADP. It participates in pyrimidine metabolism; CTP biosynthesis via de novo pathway; UDP from UMP (UMPK route): step 1/1. Allosterically activated by GTP. Inhibited by UTP. Its function is as follows. Catalyzes the reversible phosphorylation of UMP to UDP. The sequence is that of Uridylate kinase from Streptococcus thermophilus (strain ATCC BAA-250 / LMG 18311).